The primary structure comprises 85 residues: Putative membrane protein insertion efficiency factor (85 aa).

It belongs to the UPF0161 family.

The protein localises to the cell membrane. Its function is as follows. Could be involved in insertion of integral membrane proteins into the membrane. This chain is Putative membrane protein insertion efficiency factor, found in Buchnera aphidicola subsp. Baizongia pistaciae (strain Bp).